We begin with the raw amino-acid sequence, 462 residues long: MENKSARAKVQAFGGFLTAMVIPNIGAFIAWGFITALFIPTGWLPNEHFAKIVGPMITYLLPVMIGSTGGHLVGGKRGAVMGGIGTIGVIVGAEIPMFLGSMIMGPLGGLVIKYVDKALEKRIPAGFEMVINNFSLGIAGMLLCLLGFEVIGPAVLIANTFVKECIEALVHAGYLPLLSVINEPAKVLFLNNAIDQGVYYPLGMQQASVNGKSIFFMVASNPGPGLGLLLAFTLFGKGMSKRSAPGAMIIHFLGGIHELYFPYVLMKPLTIIAMIAGGMSGTWMFNLLDGGLVAGPSPGSIFAYLALTPKGSFLATIAGVTVGTLVSFAITSLILKMEKTVETESEDEFAQSANAVKAMKQEGAFSLSRVKRIAFVCDAGMGSSAMGATTFRKRLEKAGLAIEVKHYAIENVPADADIVVTHASLEGRVKRVTDKPLILINNYIGDPKLDTLFNQLTAEHKH.

At 1-24 the chain is on the cytoplasmic side; it reads MENKSARAKVQAFGGFLTAMVIPN. The 332-residue stretch at 13–344 folds into the PTS EIIC type-2 domain; it reads FGGFLTAMVI…LKMEKTVETE (332 aa). A helical membrane pass occupies residues 25-46; the sequence is IGAFIAWGFITALFIPTGWLPN. The Periplasmic segment spans residues 47 to 50; the sequence is EHFA. A helical transmembrane segment spans residues 51-71; the sequence is KIVGPMITYLLPVMIGSTGGH. Residues 72–134 lie on the Cytoplasmic side of the membrane; sequence LVGGKRGAVM…AGFEMVINNF (63 aa). A helical membrane pass occupies residues 135-156; the sequence is SLGIAGMLLCLLGFEVIGPAVL. Topologically, residues 157–165 are periplasmic; the sequence is IANTFVKEC. A helical membrane pass occupies residues 166–186; it reads IEALVHAGYLPLLSVINEPAK. Over 187-273 the chain is Cytoplasmic; the sequence is VLFLNNAIDQ…VLMKPLTIIA (87 aa). Residues 274-293 form a helical membrane-spanning segment; it reads MIAGGMSGTWMFNLLDGGLV. Topologically, residues 294–313 are periplasmic; sequence AGPSPGSIFAYLALTPKGSF. Residues 314–335 form a helical membrane-spanning segment; the sequence is LATIAGVTVGTLVSFAITSLIL. The Cytoplasmic segment spans residues 336 to 462; the sequence is KMEKTVETES…FNQLTAEHKH (127 aa). The region spanning 371–461 is the PTS EIIB type-2 domain; sequence KRIAFVCDAG…LFNQLTAEHK (91 aa). Cys377 (phosphocysteine intermediate; for EIIB activity) is an active-site residue. Cys377 bears the Phosphocysteine; by EIIA mark.

It is found in the cell inner membrane. The catalysed reaction is D-mannitol(out) + N(pros)-phospho-L-histidyl-[protein] = D-mannitol 1-phosphate(in) + L-histidyl-[protein]. Functionally, the phosphoenolpyruvate-dependent sugar phosphotransferase system (sugar PTS), a major carbohydrate active transport system, catalyzes the phosphorylation of incoming sugar substrates concomitantly with their translocation across the cell membrane. The enzyme II CmtAB PTS system is involved in D-mannitol transport. In Escherichia coli O157:H7, this protein is PTS system mannitol-specific cryptic EIICB component (cmtA).